Consider the following 215-residue polypeptide: Cytochrome b6 (215 aa).

Residues 32 to 52 (IFYCLGGITLTCFLVQVATGF) traverse the membrane as a helical segment. Cys-35 is a heme c binding site. Heme b is bound by residues His-86 and His-100. Helical transmembrane passes span 90 to 110 (ASMMVLMMILHIFRVYLTGGF), 116 to 136 (LTWVTGVILAVLTVSFGVTGY), and 186 to 206 (LHTFVLPLLTAVFMLMHFLMI). Residues His-187 and His-202 each contribute to the heme b site.

The protein belongs to the cytochrome b family. PetB subfamily. As to quaternary structure, the 4 large subunits of the cytochrome b6-f complex are cytochrome b6, subunit IV (17 kDa polypeptide, PetD), cytochrome f and the Rieske protein, while the 4 small subunits are PetG, PetL, PetM and PetN. The complex functions as a dimer. Heme b serves as cofactor. It depends on heme c as a cofactor.

It is found in the plastid. The protein resides in the chloroplast thylakoid membrane. Its function is as follows. Component of the cytochrome b6-f complex, which mediates electron transfer between photosystem II (PSII) and photosystem I (PSI), cyclic electron flow around PSI, and state transitions. This chain is Cytochrome b6, found in Physcomitrium patens (Spreading-leaved earth moss).